Reading from the N-terminus, the 231-residue chain is 5'-methylthioadenosine/S-adenosylhomocysteine nucleosidase (231 aa).

Glutamate 12 serves as the catalytic Proton acceptor. Substrate-binding positions include glycine 78, valine 153, and methionine 174–glutamate 175. The Proton donor role is filled by aspartate 198.

The protein belongs to the PNP/UDP phosphorylase family. MtnN subfamily.

The enzyme catalyses S-adenosyl-L-homocysteine + H2O = S-(5-deoxy-D-ribos-5-yl)-L-homocysteine + adenine. The catalysed reaction is S-methyl-5'-thioadenosine + H2O = 5-(methylsulfanyl)-D-ribose + adenine. It catalyses the reaction 5'-deoxyadenosine + H2O = 5-deoxy-D-ribose + adenine. Its pathway is amino-acid biosynthesis; L-methionine biosynthesis via salvage pathway; S-methyl-5-thio-alpha-D-ribose 1-phosphate from S-methyl-5'-thioadenosine (hydrolase route): step 1/2. Its function is as follows. Catalyzes the irreversible cleavage of the glycosidic bond in both 5'-methylthioadenosine (MTA) and S-adenosylhomocysteine (SAH/AdoHcy) to adenine and the corresponding thioribose, 5'-methylthioribose and S-ribosylhomocysteine, respectively. Also cleaves 5'-deoxyadenosine, a toxic by-product of radical S-adenosylmethionine (SAM) enzymes, into 5-deoxyribose and adenine. The protein is 5'-methylthioadenosine/S-adenosylhomocysteine nucleosidase of Aliivibrio fischeri (strain MJ11) (Vibrio fischeri).